The primary structure comprises 564 residues: Glutamate--tRNA ligase (564 aa).

The 'HIGH' region motif lies at 107 to 117 (PNPNGPPTLGS).

Belongs to the class-I aminoacyl-tRNA synthetase family. Glutamate--tRNA ligase type 2 subfamily.

It localises to the cytoplasm. It catalyses the reaction tRNA(Glu) + L-glutamate + ATP = L-glutamyl-tRNA(Glu) + AMP + diphosphate. Catalyzes the attachment of glutamate to tRNA(Glu) in a two-step reaction: glutamate is first activated by ATP to form Glu-AMP and then transferred to the acceptor end of tRNA(Glu). The chain is Glutamate--tRNA ligase from Methanothrix thermoacetophila (strain DSM 6194 / JCM 14653 / NBRC 101360 / PT) (Methanosaeta thermophila).